The sequence spans 275 residues: Digeranylgeranylglyceryl phosphate synthase (275 aa).

8 helical membrane passes run valine 12–tryptophan 32, threonine 35–isoleucine 55, isoleucine 88–phenylalanine 108, lysine 125–glycine 145, glycine 146–phenylalanine 166, tryptophan 200–leucine 220, valine 224–histidine 244, and serine 255–isoleucine 275.

It belongs to the UbiA prenyltransferase family. DGGGP synthase subfamily. The cofactor is Mg(2+).

The protein localises to the cell membrane. It carries out the reaction sn-3-O-(geranylgeranyl)glycerol 1-phosphate + (2E,6E,10E)-geranylgeranyl diphosphate = 2,3-bis-O-(geranylgeranyl)-sn-glycerol 1-phosphate + diphosphate. The protein operates within membrane lipid metabolism; glycerophospholipid metabolism. In terms of biological role, prenyltransferase that catalyzes the transfer of the geranylgeranyl moiety of geranylgeranyl diphosphate (GGPP) to the C2 hydroxyl of (S)-3-O-geranylgeranylglyceryl phosphate (GGGP). This reaction is the second ether-bond-formation step in the biosynthesis of archaeal membrane lipids. In Sulfolobus acidocaldarius (strain ATCC 33909 / DSM 639 / JCM 8929 / NBRC 15157 / NCIMB 11770), this protein is Digeranylgeranylglyceryl phosphate synthase.